A 416-amino-acid polypeptide reads, in one-letter code: Phosphoglycerate kinase 2 (416 aa).

Residues 28–30 (DMN), Arg44, 65–68 (HQSR), Arg122, and Arg162 each bind substrate. Residues Glu337 and 362–365 (GGHI) each bind ATP.

This sequence belongs to the phosphoglycerate kinase family. Monomer.

It localises to the cytoplasm. The enzyme catalyses (2R)-3-phosphoglycerate + ATP = (2R)-3-phospho-glyceroyl phosphate + ADP. It participates in carbohydrate degradation; glycolysis; pyruvate from D-glyceraldehyde 3-phosphate: step 2/5. This Methanosarcina acetivorans (strain ATCC 35395 / DSM 2834 / JCM 12185 / C2A) protein is Phosphoglycerate kinase 2.